Here is a 511-residue protein sequence, read N- to C-terminus: GMP synthase [glutamine-hydrolyzing] (511 aa).

A Glutamine amidotransferase type-1 domain is found at Asp-5–Val-195. Catalysis depends on Cys-82, which acts as the Nucleophile. Catalysis depends on residues His-169 and Glu-171. The 191-residue stretch at Trp-196–Arg-386 folds into the GMPS ATP-PPase domain. Ser-223–Ser-229 serves as a coordination point for ATP.

In terms of assembly, homodimer.

It carries out the reaction XMP + L-glutamine + ATP + H2O = GMP + L-glutamate + AMP + diphosphate + 2 H(+). Its pathway is purine metabolism; GMP biosynthesis; GMP from XMP (L-Gln route): step 1/1. In terms of biological role, catalyzes the synthesis of GMP from XMP. This is GMP synthase [glutamine-hydrolyzing] from Campylobacter jejuni subsp. doylei (strain ATCC BAA-1458 / RM4099 / 269.97).